We begin with the raw amino-acid sequence, 149 residues long: Large ribosomal subunit protein uL13 (149 aa).

The protein belongs to the universal ribosomal protein uL13 family. As to quaternary structure, part of the 50S ribosomal subunit.

This protein is one of the early assembly proteins of the 50S ribosomal subunit, although it is not seen to bind rRNA by itself. It is important during the early stages of 50S assembly. The protein is Large ribosomal subunit protein uL13 of Chlorobium luteolum (strain DSM 273 / BCRC 81028 / 2530) (Pelodictyon luteolum).